The chain runs to 230 residues: UPF0173 metal-dependent hydrolase Acid_3917 (230 aa).

Belongs to the UPF0173 family.

The chain is UPF0173 metal-dependent hydrolase Acid_3917 from Solibacter usitatus (strain Ellin6076).